The following is a 196-amino-acid chain: Chromophore lyase CpcS/CpeS 2 (196 aa).

This sequence belongs to the CpcS/CpeS biliprotein lyase family.

Functionally, covalently attaches a chromophore to Cys residue(s) of phycobiliproteins. The protein is Chromophore lyase CpcS/CpeS 2 of Trichodesmium erythraeum (strain IMS101).